The following is a 175-amino-acid chain: Respiratory supercomplex factor 1-B, mitochondrial (175 aa).

The 92-residue stretch at Asp-3 to Glu-94 folds into the HIG1 domain. 2 helical membrane passes run Pro-30–Ala-46 and Ile-66–Tyr-83. A coiled-coil region spans residues Tyr-83 to Ala-115.

The protein belongs to the RCF1 family. Associates with the respiratory chain complex III/complex IV supercomplex.

It localises to the mitochondrion membrane. Cytochrome c oxidase subunit which plays a role in assembly of respiratory supercomplexes. This Talaromyces marneffei (strain ATCC 18224 / CBS 334.59 / QM 7333) (Penicillium marneffei) protein is Respiratory supercomplex factor 1-B, mitochondrial (rcf1-B).